Consider the following 31-residue polypeptide: Ranatuerin-2Ca (31 aa).

Residues C24 and C29 are joined by a disulfide bond.

As to expression, expressed by the skin glands.

It is found in the secreted. Functionally, antibacterial activity against Gram-positive bacterium S.aureus and Gram-negative bacterium E.coli. Has activity against C.albicans. This chain is Ranatuerin-2Ca, found in Lithobates clamitans (Green frog).